Here is a 153-residue protein sequence, read N- to C-terminus: Probable succinate transporter subunit YjjB (153 aa).

4 helical membrane-spanning segments follow: residues 7–27 (WALLQDMVLAAIPALGFAMVF), 51–71 (MIHFGMNIELASLVASIMIGI), 83–103 (VFTVAAVIPMFPGISAYTAMI), and 125–145 (FLKASFIVGALSIGLSLPGLW).

This sequence belongs to the ThrE exporter (TC 2.A.79) family. In terms of assembly, the transporter is composed of YjjB and YjjP.

Its subcellular location is the cell inner membrane. In terms of biological role, involved in succinate export with YjjP. Both proteins are required for export. This chain is Probable succinate transporter subunit YjjB, found in Yersinia pestis bv. Antiqua (strain Antiqua).